The primary structure comprises 258 residues: UDP-N-acetylenolpyruvoylglucosamine reductase (258 aa).

Arg-142 is a catalytic residue. Ser-184 functions as the Proton donor in the catalytic mechanism. Glu-254 is an active-site residue.

Belongs to the MurB family. FAD is required as a cofactor.

It localises to the cytoplasm. It catalyses the reaction UDP-N-acetyl-alpha-D-muramate + NADP(+) = UDP-N-acetyl-3-O-(1-carboxyvinyl)-alpha-D-glucosamine + NADPH + H(+). It participates in cell wall biogenesis; peptidoglycan biosynthesis. Functionally, cell wall formation. The polypeptide is UDP-N-acetylenolpyruvoylglucosamine reductase (Campylobacter jejuni subsp. jejuni serotype O:2 (strain ATCC 700819 / NCTC 11168)).